Here is a 135-residue protein sequence, read N- to C-terminus: Mediator of RNA polymerase II transcription subunit 10 (135 aa).

This sequence belongs to the Mediator complex subunit 10 family. As to quaternary structure, component of the Mediator complex.

The protein resides in the nucleus. Functionally, component of the Mediator complex, a coactivator involved in the regulated transcription of nearly all RNA polymerase II-dependent genes. Mediator functions as a bridge to convey information from gene-specific regulatory proteins to the basal RNA polymerase II transcription machinery. Mediator is recruited to promoters by direct interactions with regulatory proteins and serves as a scaffold for the assembly of a functional preinitiation complex with RNA polymerase II and the general transcription factors. This is Mediator of RNA polymerase II transcription subunit 10 (med10) from Xenopus laevis (African clawed frog).